The primary structure comprises 525 residues: Probable feruloyl esterase B-1 (525 aa).

An N-terminal signal peptide occupies residues 1 to 20; it reads MMRWFLLIGLASAAATDSSA. Intrachain disulfides connect Cys26–Cys75, Cys61–Cys114, Cys187–Cys442, Cys256–Cys273, Cys282–Cys292, and Cys502–Cys524. 3 N-linked (GlcNAc...) asparagine glycosylation sites follow: Asn51, Asn80, and Asn98. Catalysis depends on Ser188, which acts as the Acyl-ester intermediate. Ca(2+) is bound by residues Asp257, Asp260, Ala262, and Asp264. 3 N-linked (GlcNAc...) asparagine glycosylation sites follow: Asn283, Asn288, and Asn351. Residues Asp401 and His441 each act as charge relay system in the active site.

The protein belongs to the tannase family.

It is found in the secreted. The catalysed reaction is feruloyl-polysaccharide + H2O = ferulate + polysaccharide.. Involved in degradation of plant cell walls. Hydrolyzes the feruloyl-arabinose ester bond in arabinoxylans as well as the feruloyl-galactose and feruloyl-arabinose ester bonds in pectin. This is Probable feruloyl esterase B-1 (faeB-1) from Neosartorya fischeri (strain ATCC 1020 / DSM 3700 / CBS 544.65 / FGSC A1164 / JCM 1740 / NRRL 181 / WB 181) (Aspergillus fischerianus).